Reading from the N-terminus, the 581-residue chain is Leucine aminopeptidase 3, chloroplastic (581 aa).

The N-terminal 50 residues, 1 to 50, are a transit peptide targeting the chloroplast; sequence MAVTLVTSCASSSRFHFRSFSSSPSSLSSCFVRFQLLSRLRVSFAITPLY. Mn(2+) is bound by residues lysine 350 and aspartate 355. Residue lysine 362 is part of the active site. Positions 375, 435, and 437 each coordinate Mn(2+). Residue arginine 439 is part of the active site.

Belongs to the peptidase M17 family. In terms of assembly, homohexamer (dimer of homotrimers). Mn(2+) is required as a cofactor.

The protein resides in the plastid. The protein localises to the chloroplast. It carries out the reaction Release of an N-terminal amino acid, Xaa-|-Yaa-, in which Xaa is preferably Leu, but may be other amino acids including Pro although not Arg or Lys, and Yaa may be Pro. Amino acid amides and methyl esters are also readily hydrolyzed, but rates on arylamides are exceedingly low.. The catalysed reaction is Release of N-terminal proline from a peptide.. Its function is as follows. Presumably involved in the processing and regular turnover of intracellular proteins. Catalyzes the removal of unsubstituted N-terminal amino acids from various peptides. Possesses Cys-Gly dipeptidase activity. The sequence is that of Leucine aminopeptidase 3, chloroplastic from Arabidopsis thaliana (Mouse-ear cress).